Consider the following 544-residue polypeptide: Phosphoenolpyruvate carboxykinase (ATP) (544 aa).

ATP is bound at residue 246 to 253; sequence GLSGTGKT.

The protein belongs to the phosphoenolpyruvate carboxykinase (ATP) family.

It catalyses the reaction oxaloacetate + ATP = phosphoenolpyruvate + ADP + CO2. The protein operates within carbohydrate biosynthesis; gluconeogenesis. In Candida glabrata (strain ATCC 2001 / BCRC 20586 / JCM 3761 / NBRC 0622 / NRRL Y-65 / CBS 138) (Yeast), this protein is Phosphoenolpyruvate carboxykinase (ATP) (PCK1).